We begin with the raw amino-acid sequence, 171 residues long: ATP synthase subunit b (171 aa).

The chain crosses the membrane as a helical span at residues Phe-2–Leu-22.

Belongs to the ATPase B chain family. In terms of assembly, F-type ATPases have 2 components, F(1) - the catalytic core - and F(0) - the membrane proton channel. F(1) has five subunits: alpha(3), beta(3), gamma(1), delta(1), epsilon(1). F(0) has three main subunits: a(1), b(2) and c(10-14). The alpha and beta chains form an alternating ring which encloses part of the gamma chain. F(1) is attached to F(0) by a central stalk formed by the gamma and epsilon chains, while a peripheral stalk is formed by the delta and b chains.

It is found in the cell inner membrane. F(1)F(0) ATP synthase produces ATP from ADP in the presence of a proton or sodium gradient. F-type ATPases consist of two structural domains, F(1) containing the extramembraneous catalytic core and F(0) containing the membrane proton channel, linked together by a central stalk and a peripheral stalk. During catalysis, ATP synthesis in the catalytic domain of F(1) is coupled via a rotary mechanism of the central stalk subunits to proton translocation. Functionally, component of the F(0) channel, it forms part of the peripheral stalk, linking F(1) to F(0). The sequence is that of ATP synthase subunit b from Helicobacter pylori (strain HPAG1).